A 71-amino-acid polypeptide reads, in one-letter code: DNA-directed RNA polymerase subunit omega (71 aa).

The protein belongs to the RNA polymerase subunit omega family. As to quaternary structure, the RNAP catalytic core consists of 2 alpha, 1 beta, 1 beta' and 1 omega subunit. When a sigma factor is associated with the core the holoenzyme is formed, which can initiate transcription.

It carries out the reaction RNA(n) + a ribonucleoside 5'-triphosphate = RNA(n+1) + diphosphate. Promotes RNA polymerase assembly. Latches the N- and C-terminal regions of the beta' subunit thereby facilitating its interaction with the beta and alpha subunits. This Campylobacter curvus (strain 525.92) protein is DNA-directed RNA polymerase subunit omega.